The primary structure comprises 537 residues: Probable sterol O-acyltransferase 1 (537 aa).

4 consecutive transmembrane segments (helical) span residues 98-118, 140-160, 174-194, and 199-219; these read FRGFYVLFWLSMAAWVLQLYA, FFVLFSSDFLMICLSFFSYGL, LGYTIQTLWQGFYMVLAVYWV, and FPIVQCVFFTLHCAVLIMKQF. N-linked (GlcNAc...) asparagine glycosylation occurs at Asn250. 2 helical membrane-spanning segments follow: residues 344–364 and 384–404; these read FGLLALTLALVDWYFVPSAVA and IMFPAIILYLIMFYLIFDCIL. The FYXDWWN motif signature appears at 418–424; that stretch reads FYGAWWN. Helical transmembrane passes span 462–482 and 517–537; these read AVLLTFLISALVHEFVMLLAT and VFFWIGMFTGPSFLCILYIVF. The active site involves His474.

Belongs to the membrane-bound acyltransferase family. Sterol o-acyltransferase subfamily.

Its subcellular location is the endoplasmic reticulum membrane. Functionally, sterol O-acyltransferase that catalyzes the formation of stery esters. This Schizosaccharomyces pombe (strain 972 / ATCC 24843) (Fission yeast) protein is Probable sterol O-acyltransferase 1 (are1).